The following is a 126-amino-acid chain: Anti-adapter protein IraD (126 aa).

It belongs to the GpW/Gp25 family. IraD subfamily. As to quaternary structure, interacts with RssB.

The protein localises to the cytoplasm. Inhibits RpoS proteolysis by regulating RssB activity, thereby increasing the stability of the sigma stress factor RpoS during oxidative stress. Its effect on RpoS stability is due to its interaction with RssB, which probably blocks the interaction of RssB with RpoS, and the consequent delivery of the RssB-RpoS complex to the ClpXP protein degradation pathway. In Salmonella choleraesuis (strain SC-B67), this protein is Anti-adapter protein IraD.